We begin with the raw amino-acid sequence, 632 residues long: Palmitoyltransferase ZDHHC17 (632 aa).

Over 1–304 (MQREEGFNTK…LKADKEFRQK (304 aa)) the chain is Cytoplasmic. A necessary and sufficient for interaction with DNAJC5 and SNAP25 region spans residues 11–305 (MADGPDEYET…KADKEFRQKV (295 aa)). ANK repeat units follow at residues 51–86 (THIDDYSTWDIVKATQYGIYERCRELVEAGYDVRQP), 89–118 (ENVTLLHWAAINNRIDLVKYYISKGAIVDQ), 123–152 (LNSTPLHWATRQGHLSMVVQLMKYGADPSL), 156–185 (EGCSCIHLAAQFGHTSIVAYLIAKGQDVDM), 189–219 (NGMTPLMWAAYRTHSVDPTRLLLTFNVSVNL), 224–253 (HKNTALHWAVLAGNTTVISLLLEAGGNVDA), and 257–286 (KGESALDLAKQRKNVWMINHLQEARQAKGY). 2 helical membrane-spanning segments follow: residues 305–325 (VMLGTPFLVIWLVGFIADLDI) and 326–346 (DSWLIKGLMYGGVWATVQFLS). The Cytoplasmic portion of the chain corresponds to 347-357 (KSFFDHSMHSA). The helical transmembrane segment at 358 to 378 (LPLGIYLATKFWMYVTWFFWF) threads the bilayer. The Lumenal segment spans residues 379–381 (WND). The chain crosses the membrane as a helical span at residues 382–402 (LNFLFIHLPFLANSVALFYNF). The Cytoplasmic segment spans residues 403–480 (GKSWKSDPGI…GNCVGAGNHR (78 aa)). The DHHC domain maps to 437-487 (IFCSTCLIRKPVRSKHCGVCNRCIAKFDHHCPWVGNCVGAGNHRYFMGYLF). Catalysis depends on Cys-467, which acts as the S-palmitoyl cysteine intermediate. The chain crosses the membrane as a helical span at residues 481 to 501 (YFMGYLFFLLFMICWMIYGCV). The Lumenal portion of the chain corresponds to 502 to 529 (SYWGLHCETTYTKDGFWTYITQIATCSP). A helical membrane pass occupies residues 530–550 (WMFWMFLNSVFHFLWVAVLLM). The Cytoplasmic segment spans residues 551 to 632 (CQLYQITCLG…QISGSGYQLV (82 aa)).

This sequence belongs to the DHHC palmitoyltransferase family. AKR/ZDHHC17 subfamily. As to quaternary structure, interacts (via ANK repeats) with numerous proteins (via the consensus sequence motif [VIAP]-[VIT]-x-x-Q-P). Interacts (via ANK repeats) with CLIP3. Interacts (via ANK repeats) with HTT. Interacts (via ANK repeats) with DNAJC5 (via C-terminus). Interacts (via ANK repeats) with MAP6. Interacts (via ANK repeats) with SNAP23. Interacts (via ANK repeats) with SNAP25. Interacts (via ANK repeats) with EVL. Interacts with SPRED1 and SPRED3. Interacts with GPM6A and OPTN. May interact (via ANK repeats) with SPRED2. May interact with NTRK1; may regulate its localization and function. Post-translationally, autopalmitoylated. Autopalmitoylation has a regulatory role in ZDHHC17-mediated Mg(2+) transport. In terms of tissue distribution, expressed in liver, testis, kidney, heart, pancreas and brain. Highest expression was seen in the brain. Localized predominantly in the perinuclear regions of neurons from the cortex, striatum and hippocampus. Colocalized with HTT in the medium spiny neurons of the striatum and the spiny neurons that project into the globus pallidus.

Its subcellular location is the golgi apparatus membrane. The protein localises to the cytoplasmic vesicle membrane. The protein resides in the presynaptic cell membrane. It carries out the reaction L-cysteinyl-[protein] + hexadecanoyl-CoA = S-hexadecanoyl-L-cysteinyl-[protein] + CoA. It catalyses the reaction L-cysteinyl-[protein] + tetradecanoyl-CoA = S-tetradecanoyl-L-cysteinyl-[protein] + CoA. The enzyme catalyses L-cysteinyl-[protein] + octadecanoyl-CoA = S-octadecanoyl-L-cysteinyl-[protein] + CoA. Its function is as follows. Palmitoyltransferase that catalyzes the addition of palmitate onto various protein substrates and is involved in a variety of cellular processes. Has no stringent fatty acid selectivity and in addition to palmitate can also transfer onto target proteins myristate from tetradecanoyl-CoA and stearate from octadecanoyl-CoA. Palmitoyltransferase specific for a subset of neuronal proteins, including SNAP25, DLG4/PSD95, GAD2, SYT1 and HTT. Also palmitoylates neuronal protein GPM6A as well as SPRED1 and SPRED3. Could also play a role in axonogenesis through the regulation of NTRK1 and the downstream ERK1/ERK2 signaling cascade. May be involved in the sorting or targeting of critical proteins involved in the initiating events of endocytosis at the plasma membrane. May play a role in Mg(2+) transport. Could also palmitoylate DNAJC5 and regulate its localization to the Golgi membrane. Palmitoylates CASP6, thereby preventing its dimerization and subsequent activation. The chain is Palmitoyltransferase ZDHHC17 from Mus musculus (Mouse).